Consider the following 140-residue polypeptide: ATP synthase epsilon chain (140 aa).

This sequence belongs to the ATPase epsilon chain family. F-type ATPases have 2 components, CF(1) - the catalytic core - and CF(0) - the membrane proton channel. CF(1) has five subunits: alpha(3), beta(3), gamma(1), delta(1), epsilon(1). CF(0) has three main subunits: a, b and c.

Its subcellular location is the cell inner membrane. Functionally, produces ATP from ADP in the presence of a proton gradient across the membrane. The chain is ATP synthase epsilon chain from Neisseria meningitidis serogroup C (strain 053442).